Reading from the N-terminus, the 356-residue chain is CLIP domain-containing serine protease C9 (356 aa).

The region spanning 49-94 (SCDTPQVIGGKCMNISLCDPAFVHSIAYQEHTPVCQQNAFYRVICC) is the Clip domain. Intrachain disulfides connect Cys-50–Cys-93, Cys-60–Cys-83, Cys-66–Cys-94, and Cys-139–Cys-155. An N-linked (GlcNAc...) asparagine glycan is attached at Asn-62. Positions 109-351 (IMHGIEAEPG…YFGWIKETVS (243 aa)) constitute a Peptidase S1 domain. Active-site charge relay system residues include His-154 and Asp-194. A disulfide bridge connects residues Cys-258 and Cys-284. The N-linked (GlcNAc...) asparagine glycan is linked to Asn-292. Cys-300 and Cys-328 are disulfide-bonded. Ser-304 serves as the catalytic Charge relay system.

Belongs to the peptidase S1 family. CLIP subfamily. As to quaternary structure, in the active form, heterodimer of a p12 subunit and a p30 subunit; disulfide-linked. Post-translationally, secreted as a full-length protein. Following bacterium E.coli infection, proteolytically cleaved into two chains, p12 and p30, which remain covalently linked.

It localises to the secreted. Functionally, probable serine protease which plays an essential role in the innate immune response against bacteria and protozoa infection by activating the melanization cascade. In the susceptible strain G3, appears to be dispensable for ookinete elimination which occurs by lysis. The chain is CLIP domain-containing serine protease C9 from Anopheles gambiae (African malaria mosquito).